The primary structure comprises 364 residues: Leucine-rich repeat-containing protein 19 (364 aa).

Positions 1–20 are cleaved as a signal peptide; that stretch reads MKVTRFMFWLFSMLLPSVKS. Residues 21 to 264 are Extracellular-facing; it reads QASETEVPCN…SEHEPLGKSW (244 aa). 4 N-linked (GlcNAc...) asparagine glycosylation sites follow: N30, N35, N46, and N88. 6 LRR repeats span residues 44-69, 70-93, 94-117, 118-141, 143-163, and 164-190; these read STNV…VLQM, YSLL…SFRN, LLNL…SFVG, LNEL…TFVP, NNLK…APQL, and PHLE…NWLN. Residues 174 to 225 form the LRRCT domain; the sequence is NPWNCTCGLLELHNWLNTSNVTLENENMTMCSYPDELKHDSIKSAPFTTECH. Residues N177, N190, N193, N200, N241, N245, and N250 are each glycosylated (N-linked (GlcNAc...) asparagine). Residues 265–285 traverse the membrane as a helical segment; that stretch reads AFLVGVVATVLLTSLLIFIAI. The Cytoplasmic segment spans residues 286 to 364; it reads KCPVWYNILL…IDINEVHEEK (79 aa).

In terms of assembly, interacts with TRAF2 and TRAF6. As to expression, strongly expressed in kidney, also expressed in spleen, intestine and colon. Highly expressed in epithelial cells. In kidney, mainly expressed in renal collecting duct epithelial cells.

It localises to the membrane. Activated by TLR ligands such as LPS, bacterial DNA and peptidoglycan. In terms of biological role, pathogen-recognition receptor which mediates the activation of TRAF2- and TRAF6 NF-kappa-B signaling pathways and induces the expression of pro-inflammatory cytokines. In kidney, prevents infection by uropathogenic bacteria by inducing the production of cytokines, chemokines and antimicrobial substances. In gut, involved in host-microbiota interactions, plays a critical role in promoting the recruitment of immune cells and intestinal inflammation. The chain is Leucine-rich repeat-containing protein 19 from Mus musculus (Mouse).